Reading from the N-terminus, the 191-residue chain is Auxin-responsive protein IAA32 (191 aa).

An EAR-like (transcriptional repression) motif is present at residues Leu32–Leu36. One can recognise a PB1 domain in the interval Tyr98–Arg184.

This sequence belongs to the Aux/IAA family. Homodimers and heterodimers.

Its subcellular location is the nucleus. Aux/IAA proteins are short-lived transcriptional factors that function as repressors of early auxin response genes at low auxin concentrations. Repression is thought to result from the interaction with auxin response factors (ARFs), proteins that bind to the auxin-responsive promoter element (AuxRE). Formation of heterodimers with ARF proteins may alter their ability to modulate early auxin response genes expression. This chain is Auxin-responsive protein IAA32, found in Arabidopsis thaliana (Mouse-ear cress).